Here is a 154-residue protein sequence, read N- to C-terminus: Small ribosomal subunit protein uS9 (154 aa).

The interval 135 to 154 (KESKKYGLKKARKAPQYSKR) is disordered. The span at 140-154 (YGLKKARKAPQYSKR) shows a compositional bias: basic residues.

Belongs to the universal ribosomal protein uS9 family.

The polypeptide is Small ribosomal subunit protein uS9 (Salinispora arenicola (strain CNS-205)).